We begin with the raw amino-acid sequence, 637 residues long: Extracellular metalloproteinase MEP (637 aa).

Residues 1 to 21 (MRSVDSLLLLGLTGLASQANA) form the signal peptide. A propeptide spanning residues 22–246 (HPAKRQPNDS…VVGVVDYVAD (225 aa)) is cleaved from the precursor. A glycan (N-linked (GlcNAc...) asparagine) is linked at asparagine 288. Residue histidine 431 participates in Zn(2+) binding. Glutamate 432 is an active-site residue. Histidine 435 provides a ligand contact to Zn(2+).

Belongs to the peptidase M36 family. The cofactor is Zn(2+).

It localises to the secreted. Functionally, secreted metalloproteinase that probably acts as a virulence factor. Cleaves Z.mays Endochitinase A (CHIA) between residues 'Gly-29' and 'Cys-30'. The chain is Extracellular metalloproteinase MEP (MEP) from Fusarium vanettenii (strain ATCC MYA-4622 / CBS 123669 / FGSC 9596 / NRRL 45880 / 77-13-4) (Fusarium solani subsp. pisi).